Consider the following 508-residue polypeptide: Cytochrome P450 4A12B (508 aa).

The signal sequence occupies residues 1-37 (MSASALSSIRFPGSISEYLQVASVLSLLLLLFKTAQL). Residues glutamate 319 and cysteine 455 each contribute to the heme site.

It belongs to the cytochrome P450 family. The cofactor is heme. In terms of tissue distribution, expressed in lung, but almost undetectable in the kidneys of five different strains.

The protein localises to the endoplasmic reticulum membrane. The protein resides in the microsome membrane. It carries out the reaction an organic molecule + reduced [NADPH--hemoprotein reductase] + O2 = an alcohol + oxidized [NADPH--hemoprotein reductase] + H2O + H(+). The catalysed reaction is dodecanoate + reduced [NADPH--hemoprotein reductase] + O2 = 11-hydroxydodecanoate + oxidized [NADPH--hemoprotein reductase] + H2O + H(+). The enzyme catalyses dodecanoate + reduced [NADPH--hemoprotein reductase] + O2 = 12-hydroxydodecanoate + oxidized [NADPH--hemoprotein reductase] + H2O + H(+). It catalyses the reaction (5Z,8Z,11Z,14Z)-eicosatetraenoate + reduced [NADPH--hemoprotein reductase] + O2 = 18-hydroxy-(5Z,8Z,11Z,14Z)-eicosatetraenoate + oxidized [NADPH--hemoprotein reductase] + H2O + H(+). It carries out the reaction (5Z,8Z,11Z,14Z)-eicosatetraenoate + reduced [NADPH--hemoprotein reductase] + O2 = 19-hydroxy-(5Z,8Z,11Z,14Z)-eicosatetraenoate + oxidized [NADPH--hemoprotein reductase] + H2O + H(+). The catalysed reaction is (5Z,8Z,11Z,14Z)-eicosatetraenoate + reduced [NADPH--hemoprotein reductase] + O2 = 20-hydroxy-(5Z,8Z,11Z,14Z)-eicosatetraenoate + oxidized [NADPH--hemoprotein reductase] + H2O + H(+). The enzyme catalyses (5Z,8Z,11Z,14Z,17Z)-eicosapentaenoate + reduced [NADPH--hemoprotein reductase] + O2 = 19-hydroxy-(5Z,8Z,11Z,14Z,17Z)-eicosapentaenoate + oxidized [NADPH--hemoprotein reductase] + H2O + H(+). It catalyses the reaction (5Z,8Z,11Z,14Z,17Z)-eicosapentaenoate + reduced [NADPH--hemoprotein reductase] + O2 = 20-hydroxy-(5Z,8Z,11Z,14Z,17Z)-eicosapentaenoate + oxidized [NADPH--hemoprotein reductase] + H2O + H(+). It carries out the reaction (5Z,8Z,11Z,14Z,17Z)-eicosapentaenoate + reduced [NADPH--hemoprotein reductase] + O2 = (17S,18R)-epoxy-(5Z,8Z,11Z,14Z)-eicosatetraenoate + oxidized [NADPH--hemoprotein reductase] + H2O + H(+). The catalysed reaction is (5Z,8Z,11Z,14Z,17Z)-eicosapentaenoate + reduced [NADPH--hemoprotein reductase] + O2 = (17R,18S)-epoxy-(5Z,8Z,11Z,14Z)-eicosatetraenoate + oxidized [NADPH--hemoprotein reductase] + H2O + H(+). It participates in lipid metabolism; fatty acid metabolism. With respect to regulation, activated by cytochrome b5. The Vmax almost doubles in the presence of cytochrome b5. In terms of biological role, a cytochrome P450 monooxygenase involved in the metabolism of fatty acids and their oxygenated derivatives (oxylipins). Mechanistically, uses molecular oxygen inserting one oxygen atom into a substrate, and reducing the second into a water molecule, with two electrons provided by NADPH via cytochrome P450 reductase (CPR; NADPH-ferrihemoprotein reductase). Catalyzes predominantly the oxidation of the terminal carbon (omega-oxidation) of saturated and unsaturated fatty acids. May act as a major omega-hydroxylase for dodecanoic (lauric) acid in kidney. Participates in omega-hydroxylation of (5Z,8Z,11Z,14Z)-eicosatetraenoic acid (arachidonate) to 20-hydroxyeicosatetraenoic acid (20-HETE), a signaling molecule acting both as vasoconstrictive and natriuretic with overall effect on arterial blood pressure. Acts as an omega-hydroxylase and epoxidase toward (5Z,8Z,11Z,14Z,17Z)-eicosapentaenoc acid (EPA). Catalyzes the epoxidation of the last double bond of EPA with no preferred stereoselectivity, producing both (R,S) and (S,R) stereoisomers. Can also catalyze the omega-1 and omega-2 oxidation of fatty acids with lower efficiency. This Mus musculus (Mouse) protein is Cytochrome P450 4A12B.